A 525-amino-acid chain; its full sequence is MELTLWTYEGPPHIGAMRIATSMKKLHYVLHAPQGDTYADLLFTMIERRGSRPPVTYTTFQARDLGGDTAELVKGHIKEAVDRFKPEALLVGESCTAELIQDQPGSLAKGMGFDIPIVSLELPAYSKKENWGGSETFYQIVRSLLKDHSRESKQSWQEEKRRPRVNLLGPTLLGFRCRDDVLEIQKLLGQYGIDVNVVAPLGASPADILRIPNADVNVCLYPEIAESTCIWLERNLNIPFTTTVPLGVGATQDFLKELHKVLEMEIPQSVNESNNSKLTWYSNSVDSNYLTGKRVFIFGDGTHALAAARIANEELGFKVVGLGTYSREMARKVRPAAKALGLEALITNDYLEVEDAIKETSPELVLGTQMERHSAKRLGIPCAVISTPMHVQDVPARYSPQMGWEGANVIFDDWVHPLMMGLEEHLIGMFKHDFEFVDGHQSHLGHLGGKGTQNTTKEAIKTNLQDSVITDGDPIWTHEGEKELSKIPFFVRGKVRRNTENYARQAGCREINEETLYDAKAHYKA.

Position 36 (Asp-36) interacts with [4Fe-4S] cluster. The active-site Proton donor is Asp-286. 421-422 is a substrate binding site; sequence GL.

This sequence belongs to the ChlB/BchB/BchZ family. In terms of assembly, protochlorophyllide reductase is composed of three subunits; ChlL, ChlN and ChlB. Forms a heterotetramer of two ChlB and two ChlN subunits. [4Fe-4S] cluster serves as cofactor.

It catalyses the reaction chlorophyllide a + oxidized 2[4Fe-4S]-[ferredoxin] + 2 ADP + 2 phosphate = protochlorophyllide a + reduced 2[4Fe-4S]-[ferredoxin] + 2 ATP + 2 H2O. It functions in the pathway porphyrin-containing compound metabolism; chlorophyll biosynthesis (light-independent). Component of the dark-operative protochlorophyllide reductase (DPOR) that uses Mg-ATP and reduced ferredoxin to reduce ring D of protochlorophyllide (Pchlide) to form chlorophyllide a (Chlide). This reaction is light-independent. The NB-protein (ChlN-ChlB) is the catalytic component of the complex. This is Light-independent protochlorophyllide reductase subunit B from Prochlorococcus marinus (strain NATL1A).